The chain runs to 1509 residues: ABC transporter G family member 5 (1509 aa).

Positions M1–S10 are enriched in basic and acidic residues. The disordered stretch occupies residues M1–K70. Positions S11–L28 are enriched in polar residues. Positions N29–N66 are enriched in low complexity. The 248-residue stretch at V129 to S376 folds into the ABC transporter 1 domain. G168–S175 serves as a coordination point for ATP. Positions S472–L748 constitute an ABC transmembrane type-2 1 domain. 7 consecutive transmembrane segments (helical) span residues N477 to W497, L512 to F532, I557 to W577, P583 to L603, I616 to F636, I643 to L663, and I725 to L745. Residues P813 to N831 are compositionally biased toward low complexity. A disordered region spans residues P813–S881. The segment covering T839–S881 has biased composition (polar residues). Positions L888–G1141 constitute an ABC transporter 2 domain. G935 to S942 provides a ligand contact to ATP. The region spanning L1231–V1504 is the ABC transmembrane type-2 2 domain. 6 helical membrane passes run I1236–V1256, L1271–V1291, Y1320–L1340, C1352–V1372, M1379–I1399, and I1481–F1501.

Belongs to the ABC transporter superfamily. ABCG family. PDR (TC 3.A.1.205) subfamily.

Its subcellular location is the membrane. The chain is ABC transporter G family member 5 (abcG5) from Dictyostelium discoideum (Social amoeba).